A 1035-amino-acid chain; its full sequence is Kinesin-like protein KIN-4A (1035 aa).

Residues 11-370 (SVKVAVHIRP…LKYANRARNI (360 aa)) enclose the Kinesin motor domain. Residue 90–97 (GQTGSGKT) participates in ATP binding. 3 coiled-coil regions span residues 408 to 436 (CAEV…HEYR), 504 to 707 (QNSM…RKSS), and 881 to 911 (KEIV…IATS). A disordered region spans residues 704–724 (RKSSPREHSAGTNGFGTNGQT).

The protein belongs to the TRAFAC class myosin-kinesin ATPase superfamily. Kinesin family. KIN-4 subfamily. Homodimer. As to expression, expressed in stems and flowers. Detected in cells undergoing secondary wall deposition including developing interfascicular fibers and xylem cells, but also in dividing cells and expanding/elongating parenchyma cells.

It localises to the cytoplasm. Its subcellular location is the cytoskeleton. Kinesin-like motor protein involved in the control of the oriented deposition of cellulose microfibrils. Its motor activity is directed toward the microtubule's plus end. It possesses the potential to drive long-distance transport of cargo along cortical microtubules. Regulates cell wall mechanics during cell elongation, by the regulation of primary and secondary walls deposition. Contributes to cortical microtubule-mediated trafficking of cell wall components. The sequence is that of Kinesin-like protein KIN-4A from Arabidopsis thaliana (Mouse-ear cress).